The following is a 350-amino-acid chain: Glyoxylate reductase 1 (350 aa).

At T31 the chain carries Phosphothreonine. Residues 173-174 (RI), 252-254 (TAR), and D278 each bind NAD(+). Residue R254 is part of the active site. E283 is an active-site residue. Residue H301 is the Proton donor of the active site. NAD(+) is bound at residue 301-304 (HMGT).

It belongs to the D-isomer specific 2-hydroxyacid dehydrogenase family.

The protein localises to the cytoplasm. It localises to the nucleus. Its subcellular location is the mitochondrion. It carries out the reaction glycolate + NAD(+) = glyoxylate + NADH + H(+). The enzyme catalyses glycolate + NADP(+) = glyoxylate + NADPH + H(+). The catalysed reaction is (R)-glycerate + NAD(+) = 3-hydroxypyruvate + NADH + H(+). It catalyses the reaction (R)-glycerate + NADP(+) = 3-hydroxypyruvate + NADPH + H(+). Glyoxylate reductase that reversibly reduces glyoxylate to glycolate, or alternatively hydroxypyruvate to D-glycerate, using either NADPH or NADH as a cosubstrate. Does not act as a hydroxyisocaproate dehydrogenase even though it also has minor activity on alpha-ketoisocaproate. The sequence is that of Glyoxylate reductase 1 from Saccharomyces cerevisiae (strain ATCC 204508 / S288c) (Baker's yeast).